The following is a 498-amino-acid chain: Glutamate--tRNA ligase (498 aa).

A 'HIGH' region motif is present at residues 12 to 22 (PSPTGHLHIGN). Residues 259-263 (KLSKR) carry the 'KMSKS' region motif. K262 contacts ATP.

The protein belongs to the class-I aminoacyl-tRNA synthetase family. Glutamate--tRNA ligase type 1 subfamily. As to quaternary structure, monomer.

Its subcellular location is the cytoplasm. The enzyme catalyses tRNA(Glu) + L-glutamate + ATP = L-glutamyl-tRNA(Glu) + AMP + diphosphate. Functionally, catalyzes the attachment of glutamate to tRNA(Glu) in a two-step reaction: glutamate is first activated by ATP to form Glu-AMP and then transferred to the acceptor end of tRNA(Glu). The protein is Glutamate--tRNA ligase of Limosilactobacillus fermentum (strain NBRC 3956 / LMG 18251) (Lactobacillus fermentum).